The following is a 243-amino-acid chain: MRNDLETLKHIIDSSNRITFFTGAGVSVASGVPDFRSMGGLFDEISKDGLSPEYLLSRDYLEDDPEGFINFCHKRLLFVDTKPNIVHDWIAKLERNQQSLGVITQNIDGLHSDAGSQHVDELHGTLNRFYCNACHKSYTKSDVIDRTLKHCDNCGGAIRPDIVLYGEMLDQPTIIRSLNKIEHADTLVVLGSSLVVQPAAGLISNFKGDNLIIINKDRTPYDRDATLVIHDDMVSVVKSLMTE.

Positions 1–243 (MRNDLETLKH…VSVVKSLMTE (243 aa)) constitute a Deacetylase sirtuin-type domain. Positions 24, 35, 36, 105, 107, 108, and 123 each coordinate NAD(+). Residue Phe-35 coordinates nicotinamide. Nicotinamide is bound by residues Ile-107 and Asp-108. His-123 acts as the Proton acceptor in catalysis. Zn(2+)-binding residues include Cys-131, Cys-134, Cys-151, and Cys-154. The NAD(+) site is built by Ser-192, Ser-193, Asn-215, and Asp-232.

It belongs to the sirtuin family. Class U subfamily. Zn(2+) serves as cofactor.

It is found in the cytoplasm. It carries out the reaction N(6)-acetyl-L-lysyl-[protein] + NAD(+) + H2O = 2''-O-acetyl-ADP-D-ribose + nicotinamide + L-lysyl-[protein]. Its function is as follows. NAD-dependent protein deacetylase which modulates the activities of several enzymes which are inactive in their acetylated form. The protein is NAD-dependent protein deacetylase of Staphylococcus aureus (strain MSSA476).